The chain runs to 246 residues: TLC domain-containing protein 2 (246 aa).

6 helical membrane-spanning segments follow: residues 5 to 25 (SVIL…YGLG), 43 to 63 (ISTS…CFCM), 79 to 99 (SHAL…DMVI), 107 to 127 (WELL…VLTC), 128 to 148 (RYVG…FLHL), and 199 to 219 (FSYT…IVLF). Residues 35-231 (RNAWKWNNIS…LMRSDFMKAS (197 aa)) enclose the TLC domain.

Belongs to the TLCD family.

The protein localises to the cell membrane. Functionally, regulates the composition and fluidity of the plasma membrane. Inhibits the incorporation of membrane-fluidizing phospholipids containing omega-3 long-chain polyunsaturated fatty acids (LCPUFA) and thereby promotes membrane rigidity. Does not appear to have any effect on LCPUFA synthesis. This is TLC domain-containing protein 2 (tlcd2) from Danio rerio (Zebrafish).